The following is a 360-amino-acid chain: MTTGSRIVLHVDMDSFFASIEVRRDPSLAGRPVIVGADPKGGAGRGVVSTCSYEARRYGVHSGMPISRAFDLCPHGVYLPVDRPFYASVSVEIMALLSRHAGRIEQVSIDEAYLDVSDAGSFPAAGALAAAIKREVREETGLTCSVGVAPGKAVAKIASDFQKPDGLTIVRPDEVAGFLASLPVGRIPGIGKKTGEDLRQAGILTVGDLARRDVQEVIARLGRSGVRVHHLARGIDDGEVQGREGCKSISRETTFEADTADPPVLAGTLAELADDVAETLRADNLRCRTVTVKVRYRGFQTHTRSRTLPRFTSDPETIRRAASGLLLPFLNGEPVRLIGVRLSMLEGGCTRQASIDEFFS.

In terms of domain architecture, UmuC spans 8 to 191; that stretch reads VLHVDMDSFF…LPVGRIPGIG (184 aa). Residues Asp-12 and Asp-110 each coordinate Mg(2+). The active site involves Glu-111.

This sequence belongs to the DNA polymerase type-Y family. Monomer. The cofactor is Mg(2+).

It localises to the cytoplasm. It carries out the reaction DNA(n) + a 2'-deoxyribonucleoside 5'-triphosphate = DNA(n+1) + diphosphate. Poorly processive, error-prone DNA polymerase involved in untargeted mutagenesis. Copies undamaged DNA at stalled replication forks, which arise in vivo from mismatched or misaligned primer ends. These misaligned primers can be extended by PolIV. Exhibits no 3'-5' exonuclease (proofreading) activity. May be involved in translesional synthesis. This Methanoculleus marisnigri (strain ATCC 35101 / DSM 1498 / JR1) protein is DNA polymerase IV.